We begin with the raw amino-acid sequence, 632 residues long: Putative golgin subfamily A member 8I (632 aa).

The segment at 1–77 is disordered; that stretch reads MAEETQHNKL…SSATLKDLES (77 aa). A compositionally biased stretch (polar residues) spans 38-50; it reads TNGSIPQTATSGG. 2 coiled-coil regions span residues 86–154 and 209–421; these read LDSR…HMKR and KLEQ…SLMA. Positions 352-362 are enriched in basic and acidic residues; that stretch reads KQEERIQEQHK. Disordered regions lie at residues 352–383, 423–445, 496–524, and 550–569; these read KQEE…ENKS, PGEG…PMPS, LSEP…DEGE, and AHNP…ELGA. Residues 508–520 are compositionally biased toward gly residues; sequence LGGGHHQAGAQGG. Positions 529–632 are golgi-targeting domain; it reads AADGIAAYSN…CWAWLPRRRR (104 aa). A compositionally biased stretch (low complexity) spans 555–568; the sequence is DEPGPGAPAPQELG.

It belongs to the GOLGA8 family.

It is found in the golgi apparatus. It localises to the golgi stack membrane. Functionally, may be involved in maintaining Golgi structure. This is Putative golgin subfamily A member 8I from Homo sapiens (Human).